Reading from the N-terminus, the 914-residue chain is Protein translocase subunit SecA (914 aa).

Residues glutamine 87, 105 to 109 (GEGKT), and aspartate 508 contribute to the ATP site. Cysteine 898, cysteine 900, cysteine 909, and histidine 910 together coordinate Zn(2+).

The protein belongs to the SecA family. Monomer and homodimer. Part of the essential Sec protein translocation apparatus which comprises SecA, SecYEG and auxiliary proteins SecDF-YajC and YidC. It depends on Zn(2+) as a cofactor.

The protein resides in the cell inner membrane. Its subcellular location is the cytoplasm. The catalysed reaction is ATP + H2O + cellular proteinSide 1 = ADP + phosphate + cellular proteinSide 2.. Part of the Sec protein translocase complex. Interacts with the SecYEG preprotein conducting channel. Has a central role in coupling the hydrolysis of ATP to the transfer of proteins into and across the cell membrane, serving both as a receptor for the preprotein-SecB complex and as an ATP-driven molecular motor driving the stepwise translocation of polypeptide chains across the membrane. The chain is Protein translocase subunit SecA from Xylella fastidiosa (strain 9a5c).